The chain runs to 188 residues: dCTP deaminase (188 aa).

Residues 111 to 116 (KSTYAR), 135 to 137 (TLE), Q156, Y170, K179, and Q180 each bind dCTP. E137 (proton donor/acceptor) is an active-site residue.

Belongs to the dCTP deaminase family. In terms of assembly, homotrimer.

It catalyses the reaction dCTP + H2O + H(+) = dUTP + NH4(+). The protein operates within pyrimidine metabolism; dUMP biosynthesis; dUMP from dCTP (dUTP route): step 1/2. Functionally, catalyzes the deamination of dCTP to dUTP. The polypeptide is dCTP deaminase (Rickettsia canadensis (strain McKiel)).